Consider the following 166-residue polypeptide: 3-isopropylmalate dehydratase small subunit (166 aa).

It belongs to the LeuD family. LeuD type 2 subfamily. Heterodimer of LeuC and LeuD.

The enzyme catalyses (2R,3S)-3-isopropylmalate = (2S)-2-isopropylmalate. It functions in the pathway amino-acid biosynthesis; L-leucine biosynthesis; L-leucine from 3-methyl-2-oxobutanoate: step 2/4. Catalyzes the isomerization between 2-isopropylmalate and 3-isopropylmalate, via the formation of 2-isopropylmaleate. This Aliarcobacter butzleri (strain RM4018) (Arcobacter butzleri) protein is 3-isopropylmalate dehydratase small subunit.